The following is an 873-amino-acid chain: Zinc finger X-linked protein ZXDB (873 aa).

5 disordered regions span residues 1-23 (MEIP…GCPA), 48-120 (RGAQ…GGSR), 138-184 (VETV…LSAV), 240-259 (EPGV…GALI), and 301-330 (AEPA…GPAG). 2 stretches are compositionally biased toward gly residues: residues 14–23 (QGAGGGGCPA) and 85–120 (SGGG…GGSR). Position 89 is an omega-N-methylarginine (R89). Over residues 150–165 (VRREEAGAGPRPERRQ) the composition is skewed to basic and acidic residues. Positions 240-255 (EPGVAPFPQPQPPPQP) are enriched in pro residues. The segment covering 316–327 (APAAAAAQSPRG) has biased composition (low complexity). 10 consecutive C2H2-type zinc fingers follow at residues 340-364 (YLCP…LLTH), 373-397 (FKCP…LQSH), 403-427 (FGCP…MKGH), 433-455 (FKCE…QRSH), 462-486 (YQCA…NRAH), 493-517 (FACS…LRSH), 523-547 (FLCD…KRKH), 553-577 (FTCP…SITH), 583-607 (FVCP…SKKH), and 616-641 (SRCP…TKRH). The required for interaction with ZXDC stretch occupies residues 340 to 646 (YLCPEAQCGQ…MTKRHNLSQD (307 aa)). The interval 645–776 (QDLLAQLEAA…DMDDVSAGNV (132 aa)) is required for transcriptional activation.

The protein belongs to the ZXD family. As to quaternary structure, self-associates. Interacts with ZXDC and CIITA.

The protein resides in the nucleus. Cooperates with CIITA to promote transcription of MHC class I and MHC class II genes. The protein is Zinc finger X-linked protein ZXDB (Zxdb) of Mus musculus (Mouse).